A 325-amino-acid chain; its full sequence is Tryptophan--tRNA ligase (325 aa).

Residues 9–11 (QPS) and 17–18 (GN) contribute to the ATP site. The short motif at 10–18 (PSGILHIGN) is the 'HIGH' region element. Asp-132 contributes to the L-tryptophan binding site. Residues 144–146 (GKD), Val-184, and 191–195 (KMSKS) each bind ATP. A 'KMSKS' region motif is present at residues 191-195 (KMSKS).

This sequence belongs to the class-I aminoacyl-tRNA synthetase family. Homodimer.

Its subcellular location is the cytoplasm. It carries out the reaction tRNA(Trp) + L-tryptophan + ATP = L-tryptophyl-tRNA(Trp) + AMP + diphosphate + H(+). Its function is as follows. Catalyzes the attachment of tryptophan to tRNA(Trp). The polypeptide is Tryptophan--tRNA ligase (Fusobacterium nucleatum subsp. nucleatum (strain ATCC 25586 / DSM 15643 / BCRC 10681 / CIP 101130 / JCM 8532 / KCTC 2640 / LMG 13131 / VPI 4355)).